Consider the following 520-residue polypeptide: T-box transcription factor TBX22 (520 aa).

The disordered stretch occupies residues 1–91 (MALSSRARAF…NSSESLEEKD (91 aa)). Residues 33-49 (PELREKKGGEEEEERRS) show a composition bias toward basic and acidic residues. Positions 67–84 (STSASSGCGSDSGYGNSS) are enriched in low complexity. Positions 96–283 (LQGSELWKRF…RNPFAKGFRD (188 aa)) form a DNA-binding region, T-box.

Seems to be expressed at a low level.

The protein resides in the nucleus. Probable transcriptional regulator involved in developmental processes. This is major determinant crucial to palatogenesis. This chain is T-box transcription factor TBX22 (TBX22), found in Homo sapiens (Human).